A 678-amino-acid chain; its full sequence is DNA ligase (678 aa).

NAD(+) contacts are provided by residues 32-36 (DSEYD), 81-82 (SL), and Glu-113. Catalysis depends on Lys-115, which acts as the N6-AMP-lysine intermediate. NAD(+) contacts are provided by Arg-136, Glu-174, Lys-291, and Lys-315. Zn(2+)-binding residues include Cys-409, Cys-412, Cys-427, and Cys-433. The 83-residue stretch at 596 to 678 (ASDNPFAGKT…MRLLGESSDA (83 aa)) folds into the BRCT domain.

It belongs to the NAD-dependent DNA ligase family. LigA subfamily. Requires Mg(2+) as cofactor. The cofactor is Mn(2+).

It catalyses the reaction NAD(+) + (deoxyribonucleotide)n-3'-hydroxyl + 5'-phospho-(deoxyribonucleotide)m = (deoxyribonucleotide)n+m + AMP + beta-nicotinamide D-nucleotide.. DNA ligase that catalyzes the formation of phosphodiester linkages between 5'-phosphoryl and 3'-hydroxyl groups in double-stranded DNA using NAD as a coenzyme and as the energy source for the reaction. It is essential for DNA replication and repair of damaged DNA. The protein is DNA ligase of Sodalis glossinidius (strain morsitans).